We begin with the raw amino-acid sequence, 426 residues long: Lipid droplet localized protein (426 aa).

A helical transmembrane segment spans residues Phe-278–Phe-298.

It belongs to the saccharopine dehydrogenase family.

The protein localises to the membrane. It localises to the lipid droplet. The protein is Lipid droplet localized protein of Caenorhabditis elegans.